The chain runs to 340 residues: Putative inactive cytochrome P450 family member 4Z2 (340 aa).

At 1–9 the chain is on the cytoplasmic side; sequence MEPSWLQEL. A helical; Signal-anchor for type II membrane protein transmembrane segment spans residues 10 to 30; that stretch reads MAHPFLLLILLCMSLLLFQVI. At 31 to 340 the chain is on the lumenal side; it reads RLYQRRRWTI…AKYPEHQQRC (310 aa).

The protein belongs to the cytochrome P450 family. It depends on heme as a cofactor. In terms of tissue distribution, detected at low levels in mammary gland and mammary carcinoma.

It localises to the membrane. The sequence is that of Putative inactive cytochrome P450 family member 4Z2 (CYP4Z2P) from Homo sapiens (Human).